A 675-amino-acid chain; its full sequence is G-protein coupled receptor moody (675 aa).

At 1-44 the chain is on the extracellular side; it reads MSDETTGSLGDAFSPMDTPTTTIMPPPADVDESGFSHSLLTFAA. The helical transmembrane segment at 45 to 65 threads the bilayer; the sequence is VMTFLIMIVGICGNLLTVVAL. Over 66-73 the chain is Cytoplasmic; sequence LKCPKVRN. A helical membrane pass occupies residues 74–94; the sequence is VAAAFIISLCIADLLFCALVL. Topologically, residues 95-115 are extracellular; the sequence is PFQGLRFVQGTWRHGEVLCRL. Cysteines 113 and 192 form a disulfide. The chain crosses the membrane as a helical span at residues 116–136; it reads IPFIQYGNIGVSLLCIAMITI. The Cytoplasmic portion of the chain corresponds to 137–156; it reads NRYVMITHYSLYNRIYKRHW. A helical membrane pass occupies residues 157-177; sequence IAIMIAACWLFSYGMQLPTLL. At 178–206 the chain is on the extracellular side; that stretch reads GAWGRFGYDARLQTCSIMSDRHGHSSKTT. A helical membrane pass occupies residues 207 to 227; it reads LFITAFVIPCLVIIACYAKIF. Residues 228–327 lie on the Cytoplasmic side of the membrane; sequence WVVHKSEQRL…AKRNEWRITK (100 aa). The tract at residues 258 to 316 is disordered; sequence TSMPSGDGANPSQVPAGCRVSSDSSSNYSTDVPDTTPGGAGGGAGVKQQPSRVKDQREV. The span at 278 to 294 shows a compositional bias: low complexity; it reads SSDSSSNYSTDVPDTTP. Residues 328–348 form a helical membrane-spanning segment; it reads MVLAIFLSFVICYLPITIVKV. At 349–359 the chain is on the extracellular side; that stretch reads ADKDVEHPSLH. Residues 360–380 traverse the membrane as a helical segment; that stretch reads IFSYIMLYLSACINPIIYVIM. Topologically, residues 381-675 are cytoplasmic; it reads NKQYRKAYKT…LMDKKKFPKD (295 aa). Disordered regions lie at residues 475-568 and 588-675; these read SKSS…GNGS and LPPT…FPKD. Over residues 536–551 the composition is skewed to low complexity; it reads SSVISANPSSSPSPSS. The segment covering 552-565 has biased composition (gly residues); it reads SGGGIYRPGIGSMG. The span at 666–675 shows a compositional bias: basic and acidic residues; it reads LMDKKKFPKD.

It belongs to the G-protein coupled receptor 1 family.

The protein localises to the cell membrane. Required in glia to regulate the acute sensitivity to cocaine and to continuously maintain the proper blood-brain barrier (BBB) function. A moody-mediated signaling pathway functions in glia to regulate nervous system insulation and drug-related behaviors. The sequence is that of G-protein coupled receptor moody from Drosophila pseudoobscura pseudoobscura (Fruit fly).